A 742-amino-acid polypeptide reads, in one-letter code: Phosphoribosylformylglycinamidine synthase subunit PurL (742 aa).

Residue His53 is part of the active site. Positions 56 and 95 each coordinate ATP. Glu97 is a binding site for Mg(2+). Substrate contacts are provided by residues 98–101 (SHNH) and Arg120. His99 functions as the Proton acceptor in the catalytic mechanism. Residue Asp121 participates in Mg(2+) binding. Substrate is bound at residue Gln245. Residue Asp275 participates in Mg(2+) binding. 319-321 (ESQ) provides a ligand contact to substrate. Residues Asp502 and Gly539 each contribute to the ATP site. Asn540 provides a ligand contact to Mg(2+). Substrate is bound at residue Ser542.

The protein belongs to the FGAMS family. In terms of assembly, monomer. Part of the FGAM synthase complex composed of 1 PurL, 1 PurQ and 2 PurS subunits.

The protein resides in the cytoplasm. It carries out the reaction N(2)-formyl-N(1)-(5-phospho-beta-D-ribosyl)glycinamide + L-glutamine + ATP + H2O = 2-formamido-N(1)-(5-O-phospho-beta-D-ribosyl)acetamidine + L-glutamate + ADP + phosphate + H(+). The protein operates within purine metabolism; IMP biosynthesis via de novo pathway; 5-amino-1-(5-phospho-D-ribosyl)imidazole from N(2)-formyl-N(1)-(5-phospho-D-ribosyl)glycinamide: step 1/2. Its function is as follows. Part of the phosphoribosylformylglycinamidine synthase complex involved in the purines biosynthetic pathway. Catalyzes the ATP-dependent conversion of formylglycinamide ribonucleotide (FGAR) and glutamine to yield formylglycinamidine ribonucleotide (FGAM) and glutamate. The FGAM synthase complex is composed of three subunits. PurQ produces an ammonia molecule by converting glutamine to glutamate. PurL transfers the ammonia molecule to FGAR to form FGAM in an ATP-dependent manner. PurS interacts with PurQ and PurL and is thought to assist in the transfer of the ammonia molecule from PurQ to PurL. This is Phosphoribosylformylglycinamidine synthase subunit PurL from Lactobacillus acidophilus (strain ATCC 700396 / NCK56 / N2 / NCFM).